The following is a 219-amino-acid chain: Uracil-DNA glycosylase (219 aa).

Catalysis depends on Asp61, which acts as the Proton acceptor.

The protein belongs to the uracil-DNA glycosylase (UDG) superfamily. UNG family.

Its subcellular location is the cytoplasm. The enzyme catalyses Hydrolyzes single-stranded DNA or mismatched double-stranded DNA and polynucleotides, releasing free uracil.. Functionally, excises uracil residues from the DNA which can arise as a result of misincorporation of dUMP residues by DNA polymerase or due to deamination of cytosine. The polypeptide is Uracil-DNA glycosylase (Neisseria meningitidis serogroup A / serotype 4A (strain DSM 15465 / Z2491)).